The following is an 894-amino-acid chain: MILLAVLFLCFISSYSASVKGHTTGLSLNNDRLYKLKYSTEVFLDRGKGNLQDSVGYQISSNVDVVLLWRSPDGDDDQLIQITIKDVKVENVNQQRGEKSIFKGKKPPQIIRKENLEALQRPVLLHLIHGKVKEFYSYQNEPPAIQNLKRGLASLFQMQLSSGTTNEVDISGDCKVTYQAHQDKVTKIKALDSCTIERSGFTTRNQVLGVTSKATSVTTYKIEDSFVVAVLAEEIHALRLNFLQTIAGKIVSKQKLELKTTEAGPRLKSGKQVAAIIKAVDSKYTAIPIVGQVFQSECKGCSSLSQHWQSVRKHLQPDNLSKTEAVRSFLTFIQHLRTAKKEEILQILKAENKDILPQLVDAVTSAQTPDSLDAILDFLDFKSDSNIILQERFLYACGFASHPDEELLRALISKFKGSFGSNDIRESVMIIIGALVRKLCQNEGCKLKAVVDAKKLILGGLERAEKKEDTMMYLLALKNARLPEGIPLLLKYAEAAEGPISHLAVTTLQRYDAPFITDEVKKTMNRIYHQTRKVHEKTVRTTAAAVILNNNPSYMEVKNILLSIGELPKEMNKYMLSIVQDILRFEMPASKMVRRVLKEMVAHNYDRFSKSGSSSAYTGYIERGPHSASTYSLDILYSGSGILRRSNLNIFQYVGKTPLHAIQVVIEAQGLEALIAATPDEGEENLDSYAGLSPLLFDVQLRPVTFFNGYSDLMSKMLSASSDPISVVKGLILLIDHSQELQLQSGLKANMEVQGGLAIDISGSMEFSLWYRESKTRVKNRVTVVITGDITVDSSFVKAGLEISAETEAGLEFISTVQFSQYPFLVCLQMDRDGIPYRQFETKYERLSTGRGYVSRKRKEILVAGSEFPLHQENSEMCKVVFAPEPESSSSGWF.

The signal sequence occupies residues 1 to 18; sequence MILLAVLFLCFISSYSAS. The Vitellogenin domain occupies 28-662; the sequence is LNNDRLYKLK…YVGKTPLHAI (635 aa). An intrachain disulfide couples Cys174 to Cys194.

As to quaternary structure, heterodimer; heterodimerizes with the protein disulfide isomerase (P4HB/PDI). Interacts with APOB. Interacts with PRAP1.

The protein localises to the endoplasmic reticulum. It localises to the golgi apparatus. It carries out the reaction a 1,2-diacyl-sn-glycero-3-phosphocholine(in) = a 1,2-diacyl-sn-glycero-3-phosphocholine(out). The enzyme catalyses a 1,2-diacyl-sn-glycero-3-phosphoethanolamine(in) = a 1,2-diacyl-sn-glycero-3-phosphoethanolamine(out). It catalyses the reaction a cholesterol ester(in) = a cholesterol ester(out). The catalysed reaction is a triacyl-sn-glycerol(in) = a triacyl-sn-glycerol(out). Functionally, catalyzes the transport of triglyceride, cholesteryl ester, and phospholipid between phospholipid surfaces. Required for the assembly and secretion of plasma lipoproteins that contain apolipoprotein B. May be involved in regulating cholesteryl ester biosynthesis in cells that produce lipoproteins. The protein is Microsomal triglyceride transfer protein large subunit (MTTP) of Sus scrofa (Pig).